Reading from the N-terminus, the 86-residue chain is Serine protease inhibitor Kazal-type 2 (86 aa).

The first 16 residues, 1–16, serve as a signal peptide directing secretion; sequence MLRLVLLLLVTDFAAS. Residues 32–86 form the Kazal-like domain; the sequence is QFRTPDCGHFDFPACPRNLNPVCGTDMNTYSNECTLCMKIREDGSHINIIKDEPC. Cystine bridges form between Cys38-Cys68, Cys46-Cys65, and Cys54-Cys86.

In terms of tissue distribution, expressed in sperm (at protein level). Expressed in testis but not in ovary, brain, heart, kidney or lung. Within testis, expressed in epididymis and germ cells.

The protein localises to the secreted. Its subcellular location is the cytoplasmic vesicle. It localises to the secretory vesicle. It is found in the acrosome. In terms of biological role, as a strong inhibitor of acrosin, it is required for normal spermiogenesis. It probably hinders premature activation of proacrosin and other proteases, thus preventing the cascade of events leading to spermiogenesis defects. May be involved in the regulation of serine protease-dependent germ cell apoptosis. It also inhibits trypsin. The chain is Serine protease inhibitor Kazal-type 2 (Spink2) from Mus musculus (Mouse).